Reading from the N-terminus, the 435-residue chain is MAATRCWRFVLRSPGLSLHTAAEATVTAPEVTGSDVKAAPVARYPPIVASLTADSKAARQRRVERWQATVHAAKSVDEKLRILTKMQFMKYVVYPQTFALNADRWYQSFTKTVFLSGLPPPQAQPDREPAQVVDLAALRAAVCDCLLQEHFFLRRKKRAPIYQERYAVASPFLDQLVPSLTGLLSAYNPVLAAAALDCNRPVHFYWLRGEEIIPGGHRKGRVDAVRYQINDKPHNQIRISRQLPEFVPLDYSVPVEVPVKNCKPDKLPLFKRQYENAIFIGTKTADPLCYGHTQFHLLPDKLKRERLLKQNCADQIEVIFRANAIASLFAWTGAQAMYQGFWSEADVTRPFVSQGVITDGKYFSFFCYQLNTLALTAQADQNNPRKNICWGTQSMPLYETIEDNDVKGFNDDVLLQLVHFLLNRPEEDKAQLLVN.

It belongs to the mitochondrion-specific ribosomal protein mL65 family. Component of the mitochondrial ribosome small subunit (28S) which comprises a 12S rRNA and about 30 distinct proteins.

The protein resides in the mitochondrion. The polypeptide is Large ribosomal subunit protein mL65 (MRPS30) (Bos taurus (Bovine)).